The following is a 669-amino-acid chain: RNA-binding protein 14 (669 aa).

RRM domains follow at residues 1 to 73 and 79 to 149; these read MKIF…MSRP and WKIF…LSTK. Glycyl lysine isopeptide (Lys-Gly) (interchain with G-Cter in SUMO2) cross-links involve residues K126, K135, K138, K149, and K153. Disordered stretches follow at residues 147-175 and 193-232; these read STKGQKKGPGLAVQSGDKTKKPGAGDTAF and NSTGGFDGQARQPTPPFFGRDRSPLRRSPPRASYVAPLTA. Residue S161 is modified to Phosphoserine. Residue K164 is modified to N6-acetyllysine; alternate. Residue K164 forms a Glycyl lysine isopeptide (Lys-Gly) (interchain with G-Cter in SUMO2); alternate linkage. Residue T206 is modified to Phosphothreonine. Phosphoserine occurs at positions 220, 242, 244, 256, 272, and 280. Residues 284-303 form a disordered region; that stretch reads PYRGQLASPSSQSAAASSLG. A compositionally biased stretch (low complexity) spans 287–303; sequence GQLASPSSQSAAASSLG. The segment at 307 to 354 is TRBP-interacting domain; interaction with STIL; that stretch reads GAQPSASALSSYGGQAAAASSLNSYGAQGSSLASYGNQPSSYGAQAAS. 4 positions are modified to phosphoserine: S520, S523, S527, and S562. Positions 566-592 are disordered; the sequence is VANANSTPPPYERTRLSPPRASYDDPY. At T572 the chain carries Phosphothreonine. S582 carries the post-translational modification Phosphoserine. Residue K600 forms a Glycyl lysine isopeptide (Lys-Gly) (interchain with G-Cter in SUMO2) linkage. Phosphoserine occurs at positions 618, 620, 623, 627, 643, and 649.

As to quaternary structure, interacts with NCOA6, CITED1 and XRCC5/KU86. Interacts with SS18. Interacts with STIL and interferes with its interaction with CPAP. Interacts with gamma-tubulin. Part of the HDP-RNP complex composed of at least HEXIM1, PRKDC, XRCC5, XRCC6, paraspeckle proteins (SFPQ, NONO, PSPC1, RBM14, and MATR3) and NEAT1 RNA.

Its subcellular location is the nucleus. The protein resides in the nucleolus. It localises to the cytoplasm. May function as a nuclear receptor coactivator, enhancing transcription through other coactivators such as NCOA6 and CITED1. Regulates centriole biogenesis by suppressing the formation of aberrant centriolar protein complexes in the cytoplasm and thus preserving mitotic spindle integrity. Prevents the formation of the STIL-CPAP complex (which can induce the formation of aberrant centriolar protein complexes) by interfering with the interaction of STIL with CPAP. Plays a role in the regulation of DNA virus-mediated innate immune response by assembling into the HDP-RNP complex, a complex that serves as a platform for IRF3 phosphorylation and subsequent innate immune response activation through the cGAS-STING pathway. This chain is RNA-binding protein 14 (RBM14), found in Pongo abelii (Sumatran orangutan).